The chain runs to 415 residues: Adenosylhomocysteinase (415 aa).

Residues Thr53, Asp124, and Glu147 each contribute to the substrate site. 148–150 (TTT) contributes to the NAD(+) binding site. Residues Lys177 and Asp181 each coordinate substrate. Residues Asn182, 211-216 (GYGWVG), Glu234, Asn269, 290-292 (SGH), and Asn337 each bind NAD(+).

This sequence belongs to the adenosylhomocysteinase family. NAD(+) serves as cofactor.

The protein resides in the cytoplasm. The catalysed reaction is S-adenosyl-L-homocysteine + H2O = L-homocysteine + adenosine. Its pathway is amino-acid biosynthesis; L-homocysteine biosynthesis; L-homocysteine from S-adenosyl-L-homocysteine: step 1/1. Functionally, may play a key role in the regulation of the intracellular concentration of adenosylhomocysteine. The sequence is that of Adenosylhomocysteinase from Sulfolobus acidocaldarius (strain ATCC 33909 / DSM 639 / JCM 8929 / NBRC 15157 / NCIMB 11770).